Here is a 105-residue protein sequence, read N- to C-terminus: MYLQANRDDNFFAERTSGCITRLASDSLCLFHSSFIHIQTSCDTRIILRGKTLLLSSHWVPYPLRIPHYPPSWSRTIPNRIRYIPATQGDVYHGRRLGRDPYSRR.

This is an uncharacterized protein from Homo sapiens (Human).